The chain runs to 301 residues: Fatty acid elongase 3 (301 aa).

Helical transmembrane passes span 31-51, 64-84, 122-142, 161-181, 187-207, 219-239, and 257-277; these read VPYI…KSIM, IVWN…TVPY, ALAD…LFAL, VIFL…FAYV, GLWF…YYFV, FAPI…IVVC, and FSLH…SQLF. A HxxHH motif motif is present at residues 165-169; it reads HWYHH. His-168 acts as the Nucleophile in catalysis.

It belongs to the ELO family.

It is found in the endoplasmic reticulum membrane. The enzyme catalyses an acyl-CoA + malonyl-CoA + H(+) = a 3-oxoacyl-CoA + CO2 + CoA. Its pathway is lipid metabolism; fatty acid biosynthesis. In terms of biological role, involved in the synthesis of fatty acids. Elongates C14 fatty acids to C18. The sequence is that of Fatty acid elongase 3 from Trypanosoma brucei brucei (strain 927/4 GUTat10.1).